Consider the following 99-residue polypeptide: DNA-directed RNA polymerase subunit omega (99 aa).

Belongs to the RNA polymerase subunit omega family. The RNAP catalytic core consists of 2 alpha, 1 beta, 1 beta' and 1 omega subunit. When a sigma factor is associated with the core the holoenzyme is formed, which can initiate transcription.

The catalysed reaction is RNA(n) + a ribonucleoside 5'-triphosphate = RNA(n+1) + diphosphate. Its function is as follows. Promotes RNA polymerase assembly. Latches the N- and C-terminal regions of the beta' subunit thereby facilitating its interaction with the beta and alpha subunits. In Deinococcus radiodurans (strain ATCC 13939 / DSM 20539 / JCM 16871 / CCUG 27074 / LMG 4051 / NBRC 15346 / NCIMB 9279 / VKM B-1422 / R1), this protein is DNA-directed RNA polymerase subunit omega (rpoZ).